Reading from the N-terminus, the 955-residue chain is Glycine dehydrogenase (decarboxylating) (955 aa).

The residue at position 702 (K702) is an N6-(pyridoxal phosphate)lysine.

Belongs to the GcvP family. As to quaternary structure, the glycine cleavage system is composed of four proteins: P, T, L and H. The cofactor is pyridoxal 5'-phosphate.

The catalysed reaction is N(6)-[(R)-lipoyl]-L-lysyl-[glycine-cleavage complex H protein] + glycine + H(+) = N(6)-[(R)-S(8)-aminomethyldihydrolipoyl]-L-lysyl-[glycine-cleavage complex H protein] + CO2. The glycine cleavage system catalyzes the degradation of glycine. The P protein binds the alpha-amino group of glycine through its pyridoxal phosphate cofactor; CO(2) is released and the remaining methylamine moiety is then transferred to the lipoamide cofactor of the H protein. The polypeptide is Glycine dehydrogenase (decarboxylating) (Bordetella avium (strain 197N)).